The chain runs to 536 residues: SNW domain-containing protein 1 (536 aa).

Residues 1–46 (MALTSFLPAPTQLSQDQLEAEEKARSQRSRQTSLVSSRREPPPYGY) are disordered. Residue alanine 2 is modified to N-acetylalanine. Position 14 is a phosphoserine (serine 14). Residue lysine 23 forms a Glycyl lysine isopeptide (Lys-Gly) (interchain with G-Cter in SUMO2) linkage. An interaction with PPIL1 region spans residues 59-79 (GDGGAFPEIHVAQYPLDMGRK). Residues lysine 81, lysine 97, lysine 115, lysine 122, lysine 141, lysine 158, and lysine 170 each participate in a glycyl lysine isopeptide (Lys-Gly) (interchain with G-Cter in SUMO2) cross-link. Residues 174–339 (AQYIRYTPSQ…KARERRAGIK (166 aa)) form an SNW region. Phosphoserine is present on residues serine 182 and serine 190. Lysine 193 participates in a covalent cross-link: Glycyl lysine isopeptide (Lys-Gly) (interchain with G-Cter in SUMO2). The tract at residues 209-233 (PPRFKINKKIPRGPPSPPAPVMHSP) is disordered. Phosphoserine is present on residues serine 224, serine 232, and serine 234. Residues lysine 240, lysine 258, lysine 286, lysine 339, lysine 344, lysine 416, lysine 441, and lysine 452 each participate in a glycyl lysine isopeptide (Lys-Gly) (interchain with G-Cter in SUMO2) cross-link. The interval 311 to 386 (KMAQKEKEKH…RSKLQRNENR (76 aa)) is disordered. Composition is skewed to basic and acidic residues over residues 472 to 489 (FVPD…RGRE) and 503 to 530 (KFLE…EHEG). The disordered stretch occupies residues 472 to 536 (FVPDKEFSGS…EHEGKKRRKE (65 aa)). Phosphoserine occurs at positions 479 and 481. Residue lysine 509 forms a Glycyl lysine isopeptide (Lys-Gly) (interchain with G-Cter in SUMO2) linkage.

Belongs to the SNW family. As to quaternary structure, identified in the spliceosome C complex. Associates with U4/U6-U5 tri-small nuclear ribonucleoproteins (U4/U6-U5 tri-snRNPs). Component of the minor spliceosome, which splices U12-type introns. Interacts with SKI, SMAD2,SMAD3, RBPJ, RB1, PABPN1, MAGEA1, SIRT1, FOXN3, U2AF2, PPIL1, DAXX and ATP1B4. Interacts with VDR and RXRA; preferentially associates with VDR:RXRA heterodimers. Interacts with NCOR2. Interacts with MAML1. Interacts with NOTCH1 NICD; the interaction involves multimerized NOTCH1 NICD. Forms a complex with NOTCH1 NICD and MAML1; the association is dissociated by RBPJ. Associates with positive transcription elongation factor b (P-TEFb). Component of the SNARP complex which consists at least of SNIP1, SNW1, THRAP3, BCLAF1 and PNN.

The protein localises to the nucleus. In terms of biological role, involved in pre-mRNA splicing as component of the spliceosome. As a component of the minor spliceosome, involved in the splicing of U12-type introns in pre-mRNAs. Required in the specific splicing of CDKN1A pre-mRNA; the function probably involves the recruitment of U2AF2 to the mRNA. May recruit PPIL1 to the spliceosome. May be involved in cyclin-D1/CCND1 mRNA stability through the SNARP complex which associates with both the 3'end of the CCND1 gene and its mRNA. Involved in transcriptional regulation. Modulates TGF-beta-mediated transcription via association with SMAD proteins, MYOD1-mediated transcription via association with PABPN1, RB1-mediated transcriptional repression, and retinoid-X receptor (RXR)- and vitamin D receptor (VDR)-dependent gene transcription in a cell line-specific manner probably involving coactivators NCOA1 and GRIP1. Is involved in NOTCH1-mediated transcriptional activation. Binds to multimerized forms of Notch intracellular domain (NICD) and is proposed to recruit transcriptional coactivators such as MAML1 to form an intermediate preactivation complex which associates with DNA-bound CBF-1/RBPJ to form a transcriptional activation complex by releasing SNW1 and redundant NOTCH1 NICD. This chain is SNW domain-containing protein 1 (SNW1), found in Bos taurus (Bovine).